The primary structure comprises 657 residues: 1-deoxy-D-xylulose-5-phosphate synthase (657 aa).

Thiamine diphosphate-binding positions include His-73 and 113 to 115 (SHA). Asp-145 provides a ligand contact to Mg(2+). Residues 146–147 (GA), Asn-175, Tyr-293, and Glu-375 each bind thiamine diphosphate. Mg(2+) is bound at residue Asn-175.

It belongs to the transketolase family. DXPS subfamily. As to quaternary structure, homodimer. Mg(2+) serves as cofactor. It depends on thiamine diphosphate as a cofactor.

The enzyme catalyses D-glyceraldehyde 3-phosphate + pyruvate + H(+) = 1-deoxy-D-xylulose 5-phosphate + CO2. Its pathway is metabolic intermediate biosynthesis; 1-deoxy-D-xylulose 5-phosphate biosynthesis; 1-deoxy-D-xylulose 5-phosphate from D-glyceraldehyde 3-phosphate and pyruvate: step 1/1. Functionally, catalyzes the acyloin condensation reaction between C atoms 2 and 3 of pyruvate and glyceraldehyde 3-phosphate to yield 1-deoxy-D-xylulose-5-phosphate (DXP). In Renibacterium salmoninarum (strain ATCC 33209 / DSM 20767 / JCM 11484 / NBRC 15589 / NCIMB 2235), this protein is 1-deoxy-D-xylulose-5-phosphate synthase.